The primary structure comprises 368 residues: Probable endopolygalacturonase A (368 aa).

Residues 1-18 (MRSVELLSLAALGSLVAA) form the signal peptide. Positions 19–31 (APAPSRVSDLTKR) are excised as a propeptide. The cysteines at positions 35 and 50 are disulfide-linked. PbH1 repeat units follow at residues 140–162 (LEDSTITGLSIKNTPVQAISVQA), 167–192 (LIDITIDNSDGDDNGGHNTDGFDISE), 193–214 (STGVYIRGATVKNQDDCIAINS), 215–235 (GENIEFSGGTCSGGHGLSIGS), 244–265 (VKNVTITDSTVTDSANGVRIKT), 273–295 (VSEVTYSNIKLSGITDYGIVIEQ), and 307–352 (TTGV…DITG). Asp207 serves as the catalytic Proton donor. Cys209 and Cys225 are joined by a disulfide. His229 is an active-site residue. N-linked (GlcNAc...) asparagine glycosylation is present at Asn246. 2 cysteine pairs are disulfide-bonded: Cys335-Cys340 and Cys359-Cys368.

This sequence belongs to the glycosyl hydrolase 28 family.

It localises to the secreted. The catalysed reaction is (1,4-alpha-D-galacturonosyl)n+m + H2O = (1,4-alpha-D-galacturonosyl)n + (1,4-alpha-D-galacturonosyl)m.. Functionally, involved in maceration and soft-rotting of plant tissue. Hydrolyzes the 1,4-alpha glycosidic bonds of de-esterified pectate in the smooth region of the plant cell wall. This chain is Probable endopolygalacturonase A (pgaA), found in Neosartorya fischeri (strain ATCC 1020 / DSM 3700 / CBS 544.65 / FGSC A1164 / JCM 1740 / NRRL 181 / WB 181) (Aspergillus fischerianus).